The sequence spans 133 residues: Transcriptional regulator MraZ (133 aa).

SpoVT-AbrB domains are found at residues 5 to 47 (TYEH…SKDD) and 76 to 119 (TVEI…SKNK).

The protein belongs to the MraZ family. Forms oligomers.

The protein resides in the cytoplasm. It is found in the nucleoid. In Mycoplasma mycoides subsp. mycoides SC (strain CCUG 32753 / NCTC 10114 / PG1), this protein is Transcriptional regulator MraZ.